A 216-amino-acid chain; its full sequence is Probable calcium-binding protein CML35 (216 aa).

Residues 18 to 58 (TKSKASVSRSEPSSFSSNASSSSSDGSYGNLKQGPTATPIS) are disordered. Residues 23-44 (SVSRSEPSSFSSNASSSSSDGS) are compositionally biased toward low complexity. 4 consecutive EF-hand domains span residues 66–101 (DFYT…LSHE), 103–138 (PSQE…TSGE), 141–176 (VETE…IGDE), and 178–213 (CTLE…AMND). Ca(2+) is bound by residues Asp-79, Asp-81, Asp-83, and Asp-90. Residues Asp-154, Asp-156, Asn-158, Lys-160, Glu-165, Asp-191, Asn-193, Asp-195, and Asp-202 each coordinate Ca(2+).

In terms of biological role, potential calcium sensor. The polypeptide is Probable calcium-binding protein CML35 (CML35) (Arabidopsis thaliana (Mouse-ear cress)).